The sequence spans 93 residues: Pyrimidine/purine nucleoside phosphorylase (93 aa).

It belongs to the nucleoside phosphorylase PpnP family.

It carries out the reaction a purine D-ribonucleoside + phosphate = a purine nucleobase + alpha-D-ribose 1-phosphate. It catalyses the reaction adenosine + phosphate = alpha-D-ribose 1-phosphate + adenine. The enzyme catalyses cytidine + phosphate = cytosine + alpha-D-ribose 1-phosphate. The catalysed reaction is guanosine + phosphate = alpha-D-ribose 1-phosphate + guanine. It carries out the reaction inosine + phosphate = alpha-D-ribose 1-phosphate + hypoxanthine. It catalyses the reaction thymidine + phosphate = 2-deoxy-alpha-D-ribose 1-phosphate + thymine. The enzyme catalyses uridine + phosphate = alpha-D-ribose 1-phosphate + uracil. The catalysed reaction is xanthosine + phosphate = alpha-D-ribose 1-phosphate + xanthine. In terms of biological role, catalyzes the phosphorolysis of diverse nucleosides, yielding D-ribose 1-phosphate and the respective free bases. Can use uridine, adenosine, guanosine, cytidine, thymidine, inosine and xanthosine as substrates. Also catalyzes the reverse reactions. This is Pyrimidine/purine nucleoside phosphorylase from Photobacterium profundum (strain SS9).